A 176-amino-acid chain; its full sequence is Interleukin-7 (176 aa).

Residues 1 to 25 (MFHVSFRYIFGIPPLILVLLPVASS) form the signal peptide. 3 cysteine pairs are disulfide-bonded: cysteine 27–cysteine 165, cysteine 58–cysteine 153, and cysteine 71–cysteine 116. Residues asparagine 94, asparagine 115, and asparagine 140 are each glycosylated (N-linked (GlcNAc...) asparagine).

This sequence belongs to the IL-7/IL-9 family.

Its subcellular location is the secreted. In terms of biological role, hematopoietic growth factor capable of stimulating the proliferation of lymphoid progenitors. It is important for proliferation during certain stages of B-cell maturation. This chain is Interleukin-7 (IL7), found in Sus scrofa (Pig).